The primary structure comprises 410 residues: Sporulation killing factor maturation protein SkfB (410 aa).

The Radical SAM core domain occupies 103–314 (SYLPISCTLQ…LREARHKWGD (212 aa)). [4Fe-4S] cluster-binding residues include C117, C121, C124, C380, C385, and C387.

It belongs to the radical SAM superfamily. [4Fe-4S] cluster serves as cofactor.

It is found in the cytoplasm. In terms of biological role, catalyzes the formation of the thioether bond required for production of the sporulation killing factor (SKF) from SkfA. Forms the cysteine-methionine thioether bond found in SKF; the acceptor amino acid can be hydrophobic, aromatic or a small hydrophilic amino acid but not a larger hydrophilic amino acid, i.e. Met=Ala, Phe, Leu, Tyr&gt;Asn, Ser&gt;&gt;Gln, Glu, Lys. The relative position of Cys and Met in the substrate cannot be inverted, in vitro the thioether bond cannot be made in the absence of the SkfA propeptide, suggesting this is the first reaction in SKF maturation. In vitro, in the absence of a second substrate, cleaves S-adenosyl-L-methionine into Met and 5'-dA. This Bacillus subtilis (strain 168) protein is Sporulation killing factor maturation protein SkfB.